Reading from the N-terminus, the 436-residue chain is NAD(P)-dependent benzaldehyde dehydrogenase (436 aa).

Residues 117–119, 143–147, 175–178, 193–194, 215–216, C249, and 337–339 each bind NADP(+); these read GPF, KPSET, RDEN, GS, EL, and ELF. Active-site residues include E215 and C249.

Belongs to the aldehyde dehydrogenase family.

The catalysed reaction is benzaldehyde + NAD(+) + H2O = benzoate + NADH + 2 H(+). It catalyses the reaction benzaldehyde + NADP(+) + H2O = benzoate + NADPH + 2 H(+). The protein operates within aromatic compound metabolism; (R)-mandelate degradation; benzoate from (R)-mandelate: step 4/4. Its function is as follows. NAD or NADP-dependent benzaldehyde dehydrogenase that catalyzes the conversion of benzaldehyde into benzoate in the (R)-mandelate degradation pathway. The chain is NAD(P)-dependent benzaldehyde dehydrogenase (mdlD) from Pseudomonas putida (Arthrobacter siderocapsulatus).